The primary structure comprises 326 residues: UDP-3-O-acylglucosamine N-acyltransferase (326 aa).

The active-site Proton acceptor is H235.

This sequence belongs to the transferase hexapeptide repeat family. LpxD subfamily. As to quaternary structure, homotrimer.

It catalyses the reaction a UDP-3-O-[(3R)-3-hydroxyacyl]-alpha-D-glucosamine + a (3R)-hydroxyacyl-[ACP] = a UDP-2-N,3-O-bis[(3R)-3-hydroxyacyl]-alpha-D-glucosamine + holo-[ACP] + H(+). Its pathway is bacterial outer membrane biogenesis; LPS lipid A biosynthesis. Its function is as follows. Catalyzes the N-acylation of UDP-3-O-acylglucosamine using 3-hydroxyacyl-ACP as the acyl donor. Is involved in the biosynthesis of lipid A, a phosphorylated glycolipid that anchors the lipopolysaccharide to the outer membrane of the cell. This Helicobacter hepaticus (strain ATCC 51449 / 3B1) protein is UDP-3-O-acylglucosamine N-acyltransferase.